Consider the following 415-residue polypeptide: Intron-encoded DNA endonuclease aI3 (415 aa).

Positions 1–81 are COX1 exons 1 to 3 encoded; it reads MVQRWLYSTN…MPALIGGFGN (81 aa). The next 2 membrane-spanning stretches (helical) occupy residues 16–36 and 57–77; these read VLYF…SLII and VLVV…ALIG. The tract at residues 82-415 is COX1 intron 3 encoded; the sequence is QKRYESNNNN…HLKNTYLENK (334 aa).

This sequence in the C-terminal section; belongs to the LAGLIDADG endonuclease family. Mg(2+) is required as a cofactor. Post-translationally, the mature protein may arise from proteolytic cleavage of an in-frame translation of some COX1 exons plus the intron containing the aI3 open reading frame.

The protein resides in the mitochondrion. The protein localises to the membrane. In terms of biological role, mitochondrial DNA endonuclease involved in intron homing. It introduces a specific double-strand break in the DNA of the COX1 gene and thus mediates the insertion of an intron, containing its own coding sequence (group I intron), into an intronless gene. Recognizes with high specificity and cleaves the sequence 5'-GGTTTTGGTAACTATTTATTAC-3'. The chain is Intron-encoded DNA endonuclease aI3 (AI3) from Saccharomyces cerevisiae (strain ATCC 204508 / S288c) (Baker's yeast).